The following is a 457-amino-acid chain: Chromosomal replication initiator protein DnaA (457 aa).

The tract at residues 1–75 (MDAQLNNLWE…ALKIVTSRKF (75 aa)) is domain I, interacts with DnaA modulators. A domain II region spans residues 75–118 (FKIEFYLESDLEEEKENEEKQKEEKKENTNDVDGSIVVSDEMSA). Residues 119 to 335 (TLNPKYTFQS…GALIRIIAYS (217 aa)) are domain III, AAA+ region. ATP-binding residues include Gly-163, Gly-165, Lys-166, and Thr-167. Residues 336 to 457 (SLTNRDVSVD…NDITKKLTQK (122 aa)) form a domain IV, binds dsDNA region.

It belongs to the DnaA family. As to quaternary structure, oligomerizes as a right-handed, spiral filament on DNA at oriC.

It is found in the cytoplasm. Functionally, plays an essential role in the initiation and regulation of chromosomal replication. ATP-DnaA binds to the origin of replication (oriC) to initiate formation of the DNA replication initiation complex once per cell cycle. Binds the DnaA box (a 9 base pair repeat at the origin) and separates the double-stranded (ds)DNA. Forms a right-handed helical filament on oriC DNA; dsDNA binds to the exterior of the filament while single-stranded (ss)DNA is stabiized in the filament's interior. The ATP-DnaA-oriC complex binds and stabilizes one strand of the AT-rich DNA unwinding element (DUE), permitting loading of DNA polymerase. After initiation quickly degrades to an ADP-DnaA complex that is not apt for DNA replication. Binds acidic phospholipids. In Clostridium perfringens (strain ATCC 13124 / DSM 756 / JCM 1290 / NCIMB 6125 / NCTC 8237 / Type A), this protein is Chromosomal replication initiator protein DnaA.